A 206-amino-acid polypeptide reads, in one-letter code: Apoptosis regulator OPG045 (206 aa).

This sequence belongs to the orthopoxvirus OPG045 family. As to quaternary structure, homodimer. Interacts with host pro-apoptotic protein BCL2L11 (via BH3 domain). Interacts with host NLRP1. Interacts with host BAK.

It is found in the host mitochondrion outer membrane. The protein localises to the host cytoplasm. Plays a role in evading host innate immune response by inhibiting host inflammasome activation. Interacts with and inhibits NLR-mediated interleukin-1 beta/IL1B production in infected cells. At the host mitochondria outer membrane, interacts with the BH3 domain of host BAK and prevents BAK from binding active BAX. In turn, host apoptosis is inhibited. The polypeptide is Apoptosis regulator OPG045 (OPG045) (Vaccinia virus (strain L-IVP) (VACV)).